The chain runs to 324 residues: Beta-ketoacyl-[acyl-carrier-protein] synthase III (324 aa).

Residues Cys-114 and His-246 contribute to the active site. Positions 247–251 are ACP-binding; it reads QANLR. Residue Asn-276 is part of the active site.

The protein belongs to the thiolase-like superfamily. FabH family. Homodimer.

It is found in the cytoplasm. It catalyses the reaction malonyl-[ACP] + acetyl-CoA + H(+) = 3-oxobutanoyl-[ACP] + CO2 + CoA. The protein operates within lipid metabolism; fatty acid biosynthesis. Catalyzes the condensation reaction of fatty acid synthesis by the addition to an acyl acceptor of two carbons from malonyl-ACP. Catalyzes the first condensation reaction which initiates fatty acid synthesis and may therefore play a role in governing the total rate of fatty acid production. Possesses both acetoacetyl-ACP synthase and acetyl transacylase activities. Its substrate specificity determines the biosynthesis of branched-chain and/or straight-chain of fatty acids. The chain is Beta-ketoacyl-[acyl-carrier-protein] synthase III from Campylobacter jejuni subsp. jejuni serotype O:6 (strain 81116 / NCTC 11828).